A 339-amino-acid polypeptide reads, in one-letter code: Protein pelota homolog (339 aa).

The protein belongs to the eukaryotic release factor 1 family. Pelota subfamily. As to quaternary structure, monomer. The cofactor is a divalent metal cation.

It is found in the cytoplasm. Its function is as follows. May function in recognizing stalled ribosomes, interact with stem-loop structures in stalled mRNA molecules, and effect endonucleolytic cleavage of the mRNA. May play a role in the release non-functional ribosomes and degradation of damaged mRNAs. Has endoribonuclease activity. This chain is Protein pelota homolog, found in Picrophilus torridus (strain ATCC 700027 / DSM 9790 / JCM 10055 / NBRC 100828 / KAW 2/3).